The sequence spans 251 residues: Pyridoxine 5'-phosphate synthase (251 aa).

Residue Asn7 participates in 3-amino-2-oxopropyl phosphate binding. 9–10 is a 1-deoxy-D-xylulose 5-phosphate binding site; sequence DH. Arg18 contributes to the 3-amino-2-oxopropyl phosphate binding site. His43 (proton acceptor) is an active-site residue. Positions 45 and 50 each coordinate 1-deoxy-D-xylulose 5-phosphate. Glu73 functions as the Proton acceptor in the catalytic mechanism. Residue Thr103 participates in 1-deoxy-D-xylulose 5-phosphate binding. The active-site Proton donor is the His197. 3-amino-2-oxopropyl phosphate-binding positions include Gly198 and 219 to 220; that span reads GH.

This sequence belongs to the PNP synthase family. As to quaternary structure, homooctamer; tetramer of dimers.

The protein resides in the cytoplasm. It catalyses the reaction 3-amino-2-oxopropyl phosphate + 1-deoxy-D-xylulose 5-phosphate = pyridoxine 5'-phosphate + phosphate + 2 H2O + H(+). It functions in the pathway cofactor biosynthesis; pyridoxine 5'-phosphate biosynthesis; pyridoxine 5'-phosphate from D-erythrose 4-phosphate: step 5/5. In terms of biological role, catalyzes the complicated ring closure reaction between the two acyclic compounds 1-deoxy-D-xylulose-5-phosphate (DXP) and 3-amino-2-oxopropyl phosphate (1-amino-acetone-3-phosphate or AAP) to form pyridoxine 5'-phosphate (PNP) and inorganic phosphate. The protein is Pyridoxine 5'-phosphate synthase of Caulobacter sp. (strain K31).